Here is a 477-residue protein sequence, read N- to C-terminus: Proline--tRNA ligase (477 aa).

This sequence belongs to the class-II aminoacyl-tRNA synthetase family. ProS type 3 subfamily. As to quaternary structure, homodimer.

The protein resides in the cytoplasm. It catalyses the reaction tRNA(Pro) + L-proline + ATP = L-prolyl-tRNA(Pro) + AMP + diphosphate. In terms of biological role, catalyzes the attachment of proline to tRNA(Pro) in a two-step reaction: proline is first activated by ATP to form Pro-AMP and then transferred to the acceptor end of tRNA(Pro). The chain is Proline--tRNA ligase from Methanocorpusculum labreanum (strain ATCC 43576 / DSM 4855 / Z).